The sequence spans 190 residues: Molybdenum cofactor guanylyltransferase (190 aa).

GTP-binding positions include 8 to 10 (LAG), Lys20, Asp64, and Asp98. Residue Asp98 participates in Mg(2+) binding.

The protein belongs to the MobA family. Monomer. Requires Mg(2+) as cofactor.

The protein resides in the cytoplasm. The catalysed reaction is Mo-molybdopterin + GTP + H(+) = Mo-molybdopterin guanine dinucleotide + diphosphate. Its function is as follows. Transfers a GMP moiety from GTP to Mo-molybdopterin (Mo-MPT) cofactor (Moco or molybdenum cofactor) to form Mo-molybdopterin guanine dinucleotide (Mo-MGD) cofactor. This chain is Molybdenum cofactor guanylyltransferase, found in Rhodobacter capsulatus (Rhodopseudomonas capsulata).